The sequence spans 267 residues: 2-keto-3-deoxy-L-rhamnonate aldolase (267 aa).

Residue H49 is the Proton acceptor of the active site. Q151 contributes to the substrate binding site. E153 is a binding site for Mg(2+). The substrate site is built by A178 and D179. D179 serves as a coordination point for Mg(2+).

The protein belongs to the HpcH/HpaI aldolase family. KDR aldolase subfamily. In terms of assembly, homohexamer. It depends on Mg(2+) as a cofactor.

It carries out the reaction 2-dehydro-3-deoxy-L-rhamnonate = (S)-lactaldehyde + pyruvate. Functionally, catalyzes the reversible retro-aldol cleavage of 2-keto-3-deoxy-L-rhamnonate (KDR) to pyruvate and lactaldehyde. This is 2-keto-3-deoxy-L-rhamnonate aldolase from Salmonella agona (strain SL483).